The sequence spans 691 residues: Elongation factor G (691 aa).

The tr-type G domain maps to 8–282 (ERVRNIGIAA…AVIDYLPAPV (275 aa)). Residues 17–24 (AHIDAGKT), 81–85 (DTPGH), and 135–138 (NKMD) contribute to the GTP site.

This sequence belongs to the TRAFAC class translation factor GTPase superfamily. Classic translation factor GTPase family. EF-G/EF-2 subfamily.

It localises to the cytoplasm. Catalyzes the GTP-dependent ribosomal translocation step during translation elongation. During this step, the ribosome changes from the pre-translocational (PRE) to the post-translocational (POST) state as the newly formed A-site-bound peptidyl-tRNA and P-site-bound deacylated tRNA move to the P and E sites, respectively. Catalyzes the coordinated movement of the two tRNA molecules, the mRNA and conformational changes in the ribosome. This is Elongation factor G from Synechococcus sp. (strain CC9605).